The sequence spans 238 residues: 7-cyano-7-deazaguanine synthase (238 aa).

14 to 24 (FSGGQDSATCL) contacts ATP. The Zn(2+) site is built by Cys-202, Cys-217, Cys-220, and Cys-223.

It belongs to the QueC family. The cofactor is Zn(2+).

The catalysed reaction is 7-carboxy-7-deazaguanine + NH4(+) + ATP = 7-cyano-7-deazaguanine + ADP + phosphate + H2O + H(+). It functions in the pathway purine metabolism; 7-cyano-7-deazaguanine biosynthesis. In terms of biological role, catalyzes the ATP-dependent conversion of 7-carboxy-7-deazaguanine (CDG) to 7-cyano-7-deazaguanine (preQ(0)). The chain is 7-cyano-7-deazaguanine synthase from Nitrobacter hamburgensis (strain DSM 10229 / NCIMB 13809 / X14).